Consider the following 686-residue polypeptide: Delta-like protein 4 (686 aa).

The signal sequence occupies residues 1-26; it reads MTPASRSACRWALLLLAVLWPQQRAA. Residues 27-532 are Extracellular-facing; sequence GSGIFQLRLQ…GLPPSFPWVA (506 aa). Cystine bridges form between cysteine 51/cysteine 55 and cysteine 62/cysteine 75. 3 N-linked (GlcNAc...) asparagine glycosylation sites follow: asparagine 79, asparagine 109, and asparagine 162. One can recognise a DSL domain in the interval 174–218; it reads VICSDNYYGESCSRLCKKRDDHFGHYECQPDGSLSCLPGWTGKYC. Cysteines 176 and 185 form a disulfide. Interaction with Notch1 regions lie at residues 186-188 and 192-196; these read SRL and RDDHF. Cystine bridges form between cysteine 189–cysteine 201, cysteine 209–cysteine 218, cysteine 223–cysteine 234, cysteine 227–cysteine 240, cysteine 242–cysteine 251, cysteine 254–cysteine 265, cysteine 260–cysteine 271, cysteine 273–cysteine 282, cysteine 289–cysteine 301, cysteine 295–cysteine 311, cysteine 313–cysteine 322, cysteine 329–cysteine 340, cysteine 334–cysteine 349, cysteine 351–cysteine 360, cysteine 367–cysteine 378, cysteine 372–cysteine 389, cysteine 391–cysteine 400, cysteine 407–cysteine 418, cysteine 412–cysteine 427, cysteine 429–cysteine 438, cysteine 445–cysteine 456, cysteine 450–cysteine 465, cysteine 467–cysteine 476, cysteine 485–cysteine 496, cysteine 490–cysteine 507, and cysteine 509–cysteine 518. 8 consecutive EGF-like domains span residues 219 to 252, 253 to 283, 285 to 323, 325 to 361, 364 to 401, 403 to 439, 441 to 477, and 481 to 519; these read DQPI…RLCN, ECIP…LFCD, DLNY…EHCE, GLSK…QHCE, TLTC…SNCE, KVDR…THCE, HISD…RRCE, and THDA…SRCE. N-linked (GlcNAc...) asparagine glycosylation is present at asparagine 297. Asparagine 394 carries an N-linked (GlcNAc...) asparagine glycan. The helical transmembrane segment at 533-553 threads the bilayer; it reads VSLGVGLVVLLVLLVMVVVAV. Residues 554–686 are Cytoplasmic-facing; that stretch reads RQLRLRRPDD…RNECVIATEV (133 aa).

In terms of assembly, interacts with NOTCH4. Interacts (via N-terminal DSL and MNNL domains) with NOTCH1 (via EGF-like domains). In terms of tissue distribution, expressed in vascular endothelium. Expressed in retina at least during embryogenesis.

The protein resides in the cell membrane. Involved in the Notch signaling pathway as Notch ligand. Activates NOTCH1 and NOTCH4. Involved in angiogenesis; negatively regulates endothelial cell proliferation and migration and angiogenic sprouting. Essential for retinal progenitor proliferation. Required for suppressing rod fates in late retinal progenitors as well as for proper generation of other retinal cell types. During spinal cord neurogenesis, inhibits V2a interneuron fate. The chain is Delta-like protein 4 (Dll4) from Mus musculus (Mouse).